The primary structure comprises 496 residues: Beta-amylase (496 aa).

Residues D54, H94, and D102 each contribute to the substrate site. E187 serves as the catalytic Proton donor. Substrate is bound by residues K296, H301, and T343. Catalysis depends on E381, which acts as the Proton acceptor. Substrate is bound by residues 382–383 (NA) and R421. Positions 455-496 (YNHGIPPLKRSGPKIPDDVLNEATKPIPPFPWDSETDMKVDG) are disordered.

The protein belongs to the glycosyl hydrolase 14 family.

It catalyses the reaction Hydrolysis of (1-&gt;4)-alpha-D-glucosidic linkages in polysaccharides so as to remove successive maltose units from the non-reducing ends of the chains.. This Medicago sativa (Alfalfa) protein is Beta-amylase (BMY1).